A 297-amino-acid chain; its full sequence is Acetaldehyde dehydrogenase (297 aa).

NAD(+) is bound at residue 15–18; that stretch reads SGSI. C130 (acyl-thioester intermediate) is an active-site residue. Residues 162-170 and N272 contribute to the NAD(+) site; that span reads SAGIATREN.

It belongs to the acetaldehyde dehydrogenase family.

The catalysed reaction is acetaldehyde + NAD(+) + CoA = acetyl-CoA + NADH + H(+). This chain is Acetaldehyde dehydrogenase, found in Burkholderia pseudomallei (strain 1106a).